The primary structure comprises 169 residues: Heat shock protein beta-7 (169 aa).

Residues 1 to 37 (MSHRTSSAFRAERSFRSSSSSSSSSSSSASRALPAQD) form a disordered region. A required for localization to SC35 splicing speckles region spans residues 1 to 70 (MSHRTSSAFR…PLAFPARPGG (70 aa)). Residues 16–32 (RSSSSSSSSSSSSASRA) are compositionally biased toward low complexity. In terms of domain architecture, sHSP spans 61-169 (PLAFPARPGG…QQTFRTEIKI (109 aa)).

Belongs to the small heat shock protein (HSP20) family. Interacts with C-terminal domain of actin-binding protein 280. As to expression, found in both cardiac and slow skeletal (soleus) muscle.

The protein localises to the cytoplasm. It is found in the nucleus. Its subcellular location is the cajal body. The chain is Heat shock protein beta-7 (Hspb7) from Mus musculus (Mouse).